We begin with the raw amino-acid sequence, 171 residues long: MGGLEFCDQTSWYQIFIAFSLTYTPIAIYSLKVFRGTLAGIVNIFIFINCCVSFVYLMYHHSVTNTIALSLGAVIALVWGIYTLVKIVDWLVIRCRLCFLGRSYILAPPSHVDTSDGRQSLTTSLTTAFVVRKPGSTLVNGQLVPDFQRLVLGGKKAVSKGAVNLLKYVSK.

3 helical membrane-spanning segments follow: residues 11–31, 38–58, and 73–93; these read SWYQ…IYSL, LAGI…VYLM, and AVIA…WLVI.

The protein resides in the virion membrane. The protein is Protein X (VPX) of Mus musculus domesticus (western European house mouse).